Here is a 359-residue protein sequence, read N- to C-terminus: Type-1 angiotensin II receptor (359 aa).

Residues 1–25 lie on the Extracellular side of the membrane; the sequence is MILNSSTEDGIKRIQDDCPKAGRHN. Asn4 carries N-linked (GlcNAc...) asparagine glycosylation. 2 residues coordinate angiotensin II: Gln15 and Asp17. 2 disulfide bridges follow: Cys18-Cys274 and Cys101-Cys180. Residues 26–55 traverse the membrane as a helical segment; it reads YIFIMIPTLYSIIFVVGIFGNSLVVIVIYF. Over 56-61 the chain is Cytoplasmic; the sequence is YMKLKT. A helical transmembrane segment spans residues 62–89; sequence VASVFLLNLALADLCFLLTLPLWAVYTA. The Extracellular segment spans residues 90 to 98; the sequence is MEYRWPFGN. A helical transmembrane segment spans residues 99 to 125; sequence YLCKIASASVSFNLYASVFLLTCLSID. Topologically, residues 126-141 are cytoplasmic; sequence RYLAIVHPMKSRLRRT. The helical transmembrane segment at 142–165 threads the bilayer; it reads MLVAKVTCIIIWLLAGLASLPTII. The Extracellular segment spans residues 166 to 190; the sequence is HRNVFFIENTNITVCAFHYESQNST. Arg167 is an angiotensin II binding site. Asn176 is a glycosylation site (N-linked (GlcNAc...) asparagine). Angiotensin II-binding residues include Phe182, His183, and Tyr184. The N-linked (GlcNAc...) asparagine glycan is linked to Asn188. The helical transmembrane segment at 191–216 threads the bilayer; that stretch reads LPVGLGLTKNILGFLFPFLIILTSYT. Residue Lys199 coordinates angiotensin II. At 217–239 the chain is on the cytoplasmic side; sequence LIWKTLKKAYEIQKNKPRKDDIF. The helical transmembrane segment at 240–268 threads the bilayer; the sequence is KIILAIVLFFFFSWVPHQIFTFMDVLIQL. Residues 269–278 lie on the Extracellular side of the membrane; it reads GLIRDCKIED. The chain crosses the membrane as a helical span at residues 279-304; sequence IVDTAMPITICLAYFNNCLNPLFYGF. Residues 305–359 are Cytoplasmic-facing; sequence LGKKFKKYFLQLLKYIPPKAKSHSNLSTKMSTLSYRPSENGNSSTKKPAPCIEVE. Residues 336–350 show a composition bias toward polar residues; that stretch reads TLSYRPSENGNSSTK. A disordered region spans residues 336-359; it reads TLSYRPSENGNSSTKKPAPCIEVE. Cys355 carries the S-palmitoyl cysteine lipid modification.

It belongs to the G-protein coupled receptor 1 family. In terms of assembly, interacts with MAS1. Interacts with ARRB1. Interacts with FLNA (via filamin repeat 21); increases PKA-mediated phosphorylation of FLNA. Post-translationally, C-terminal Ser or Thr residues may be phosphorylated. Adrenal medulla, cortex and kidney.

It localises to the cell membrane. Functionally, receptor for angiotensin II, a vasoconstricting peptide, which acts as a key regulator of blood pressure and sodium retention by the kidney. The activated receptor in turn couples to G-alpha proteins G(q) (GNAQ, GNA11, GNA14 or GNA15) and thus activates phospholipase C and increases the cytosolic Ca(2+) concentrations, which in turn triggers cellular responses such as stimulation of protein kinase C. The sequence is that of Type-1 angiotensin II receptor (AGTR1) from Bos taurus (Bovine).